Reading from the N-terminus, the 42-residue chain is Large ribosomal subunit protein bL34c (42 aa).

The protein belongs to the bacterial ribosomal protein bL34 family.

It is found in the plastid. The protein localises to the chloroplast. This chain is Large ribosomal subunit protein bL34c (rpl34), found in Olisthodiscus luteus (Marine phytoflagellate).